A 240-amino-acid polypeptide reads, in one-letter code: uncharacterized protein (240 aa).

The N-terminal stretch at 1–18 is a signal peptide; sequence MTRYTYLFILQIISCSFA. Residue asparagine 127 is glycosylated (N-linked (GlcNAc...) asparagine). A helical transmembrane segment spans residues 215–235; the sequence is GFISSSQLPQFVYLIVFTIIG.

Its subcellular location is the membrane. This is an uncharacterized protein from Caenorhabditis elegans.